We begin with the raw amino-acid sequence, 25 residues long: Caerin-1.5 (25 aa).

At Leu25 the chain carries Leucine amide.

Expressed by the skin parotoid and/or rostral glands.

Its subcellular location is the secreted. Antibacterial peptide, that adopts an alpha helical conformation which can disrupt bacterial membranes. Each caerin displays a different antimicrobial specificity. The polypeptide is Caerin-1.5 (Ranoidea caerulea (Green tree frog)).